The primary structure comprises 469 residues: Flap endonuclease 1-B (469 aa).

Residues 1-103 are N-domain; sequence MGIKGLTGLL…GVLSKRLERR (103 aa). Position 32 (Asp32) interacts with Mg(2+). DNA is bound by residues Arg45 and Arg69. Residues Asp85, Glu157, Glu159, Asp183, and Asp185 each coordinate Mg(2+). The tract at residues 121–257 is I-domain; it reads DVDRFSRRTV…KSALKLIREY (137 aa). Glu157 lines the DNA pocket. Residues Gly235 and Asp237 each contribute to the DNA site. Residue Asp237 coordinates Mg(2+). The interval 274 to 354 is disordered; that stretch reads QKAAQAAVES…GGMQIPEEWP (81 aa). 2 stretches are compositionally biased toward acidic residues: residues 282 to 295 and 302 to 317; these read ESDE…EDEP and EMPD…EEEA. The span at 326 to 342 shows a compositional bias: basic residues; that stretch reads PKKKKASSKTKEKRKGK. Residues 412-420 are interaction with PCNA; that stretch reads QQGRLDGFF. A disordered region spans residues 424-469; sequence PKEKAAAPAPVGKAKGKGKIDAKAKGTKRKVDEKAESSAGKKPRKK. Positions 441–459 are enriched in basic and acidic residues; sequence GKIDAKAKGTKRKVDEKAE.

Belongs to the XPG/RAD2 endonuclease family. FEN1 subfamily. As to quaternary structure, interacts with PCNA. Three molecules of FEN1 bind to one PCNA trimer with each molecule binding to one PCNA monomer. PCNA stimulates the nuclease activity without altering cleavage specificity. Mg(2+) is required as a cofactor. Phosphorylated. Phosphorylation upon DNA damage induces relocalization to the nuclear plasma.

The protein resides in the nucleus. It localises to the nucleolus. Its subcellular location is the nucleoplasm. It is found in the mitochondrion. Its function is as follows. Structure-specific nuclease with 5'-flap endonuclease and 5'-3' exonuclease activities involved in DNA replication and repair. During DNA replication, cleaves the 5'-overhanging flap structure that is generated by displacement synthesis when DNA polymerase encounters the 5'-end of a downstream Okazaki fragment. It enters the flap from the 5'-end and then tracks to cleave the flap base, leaving a nick for ligation. Also involved in the long patch base excision repair (LP-BER) pathway, by cleaving within the apurinic/apyrimidinic (AP) site-terminated flap. Acts as a genome stabilization factor that prevents flaps from equilibrating into structures that lead to duplications and deletions. Also possesses 5'-3' exonuclease activity on nicked or gapped double-stranded DNA, and exhibits RNase H activity. Also involved in replication and repair of rDNA and in repairing mitochondrial DNA. The polypeptide is Flap endonuclease 1-B (Laccaria bicolor (strain S238N-H82 / ATCC MYA-4686) (Bicoloured deceiver)).